The following is a 202-amino-acid chain: Matrix protein (202 aa).

Positions 35 to 38 match the PPXY motif motif; sequence PPEY. The segment at 115-151 is essential for glycoprotein binding; sequence KIRRTLVFQWAESSGPLDGEELEYSQEITWDDDSEFV.

Belongs to the lyssavirus matrix protein family. As to quaternary structure, homomultimer. Interacts with nucleoprotein and with the cytoplasmic domain of glycoprotein.

The protein resides in the virion membrane. It localises to the host endomembrane system. Functionally, plays a major role in assembly and budding of virion. Completely covers the ribonucleoprotein coil and keep it in condensed bullet-shaped form. Inhibits viral transcription and stimulates replication. Plays a major role in early induction of TRAIL-mediated apoptosis in infected neurons. The sequence is that of Matrix protein (M) from Irkut virus (IRKV).